A 343-amino-acid chain; its full sequence is S-adenosylmethionine:tRNA ribosyltransferase-isomerase (343 aa).

This sequence belongs to the QueA family. Monomer.

Its subcellular location is the cytoplasm. The enzyme catalyses 7-aminomethyl-7-carbaguanosine(34) in tRNA + S-adenosyl-L-methionine = epoxyqueuosine(34) in tRNA + adenine + L-methionine + 2 H(+). It participates in tRNA modification; tRNA-queuosine biosynthesis. In terms of biological role, transfers and isomerizes the ribose moiety from AdoMet to the 7-aminomethyl group of 7-deazaguanine (preQ1-tRNA) to give epoxyqueuosine (oQ-tRNA). The sequence is that of S-adenosylmethionine:tRNA ribosyltransferase-isomerase from Stenotrophomonas maltophilia (strain R551-3).